We begin with the raw amino-acid sequence, 150 residues long: Large ribosomal subunit protein bL9 (150 aa).

It belongs to the bacterial ribosomal protein bL9 family.

Functionally, binds to the 23S rRNA. In Shewanella piezotolerans (strain WP3 / JCM 13877), this protein is Large ribosomal subunit protein bL9.